Reading from the N-terminus, the 134-residue chain is MDQVVVFQKMFEQVRKEQNFSWFYSELKHHRIAHYIYYLATDNIRIITHDDTVLLLRGTRNLLKVSTTKNPAKIKEAALLHICGKSTFREYCSTLAGAGVFRWVTDVNHNKRSYYAIDNTLLYIEDVENNKPLI.

To E.coli YbcV and YdfO.

This is an uncharacterized protein from Escherichia coli (strain K12).